Reading from the N-terminus, the 438-residue chain is Putative permease HI_0125 (438 aa).

The next 13 membrane-spanning stretches (helical) occupy residues 21–41 (IIAG…VPNM), 51–71 (SVFI…GLWA), 73–93 (APMA…SLVI), 97–117 (VAIP…TLIS), 137–157 (AGIG…GLVV), 167–187 (LGDF…LIIG), 195–215 (GGIL…DPNV), 238–258 (FMGA…MTAV), 296–316 (LFSG…AAGT), 326–346 (AIVV…AFLV), 347–367 (PGYA…SNVS), 386–406 (FIVL…ALVI), and 418–438 (NVGT…GWAI). 315 to 322 (GTAAGGKT) contacts ATP.

Belongs to the nucleobase:cation symporter-2 (NCS2) (TC 2.A.40) family. Azg-like subfamily.

It is found in the cell membrane. The polypeptide is Putative permease HI_0125 (Haemophilus influenzae (strain ATCC 51907 / DSM 11121 / KW20 / Rd)).